A 322-amino-acid polypeptide reads, in one-letter code: Replication factor C small subunit 2 (322 aa).

44 to 51 (GPPGTGKT) serves as a coordination point for ATP.

This sequence belongs to the activator 1 small subunits family. RfcS subfamily. As to quaternary structure, heteromultimer composed of small subunits (RfcS) and large subunits (RfcL).

Part of the RFC clamp loader complex which loads the PCNA sliding clamp onto DNA. The protein is Replication factor C small subunit 2 of Pyrobaculum arsenaticum (strain DSM 13514 / JCM 11321 / PZ6).